The sequence spans 101 residues: NAD(P)H-quinone oxidoreductase subunit 4L, chloroplastic (101 aa).

3 consecutive transmembrane segments (helical) span residues 2 to 22 (MLEH…YGLI), 32 to 52 (MCLE…SGFF), and 61 to 81 (IFSV…LAIV).

It belongs to the complex I subunit 4L family. In terms of assembly, NDH is composed of at least 16 different subunits, 5 of which are encoded in the nucleus.

It is found in the plastid. The protein localises to the chloroplast thylakoid membrane. The catalysed reaction is a plastoquinone + NADH + (n+1) H(+)(in) = a plastoquinol + NAD(+) + n H(+)(out). The enzyme catalyses a plastoquinone + NADPH + (n+1) H(+)(in) = a plastoquinol + NADP(+) + n H(+)(out). In terms of biological role, NDH shuttles electrons from NAD(P)H:plastoquinone, via FMN and iron-sulfur (Fe-S) centers, to quinones in the photosynthetic chain and possibly in a chloroplast respiratory chain. The immediate electron acceptor for the enzyme in this species is believed to be plastoquinone. Couples the redox reaction to proton translocation, and thus conserves the redox energy in a proton gradient. The polypeptide is NAD(P)H-quinone oxidoreductase subunit 4L, chloroplastic (Jasminum nudiflorum (Winter jasmine)).